The following is a 369-amino-acid chain: Histidinol-phosphate aminotransferase 2 (369 aa).

Position 231 is an N6-(pyridoxal phosphate)lysine (Lys231).

It belongs to the class-II pyridoxal-phosphate-dependent aminotransferase family. Histidinol-phosphate aminotransferase subfamily. In terms of assembly, homodimer. The cofactor is pyridoxal 5'-phosphate.

It carries out the reaction L-histidinol phosphate + 2-oxoglutarate = 3-(imidazol-4-yl)-2-oxopropyl phosphate + L-glutamate. It functions in the pathway amino-acid biosynthesis; L-histidine biosynthesis; L-histidine from 5-phospho-alpha-D-ribose 1-diphosphate: step 7/9. The protein is Histidinol-phosphate aminotransferase 2 of Legionella pneumophila subsp. pneumophila (strain Philadelphia 1 / ATCC 33152 / DSM 7513).